The sequence spans 315 residues: Ribosomal RNA small subunit methyltransferase H (315 aa).

S-adenosyl-L-methionine is bound by residues 33 to 35, Asp-53, Phe-80, Asp-101, and Gln-108; that span reads AGH.

Belongs to the methyltransferase superfamily. RsmH family.

The protein resides in the cytoplasm. It catalyses the reaction cytidine(1402) in 16S rRNA + S-adenosyl-L-methionine = N(4)-methylcytidine(1402) in 16S rRNA + S-adenosyl-L-homocysteine + H(+). Its function is as follows. Specifically methylates the N4 position of cytidine in position 1402 (C1402) of 16S rRNA. This is Ribosomal RNA small subunit methyltransferase H from Natranaerobius thermophilus (strain ATCC BAA-1301 / DSM 18059 / JW/NM-WN-LF).